Reading from the N-terminus, the 184-residue chain is Shikimate kinase (184 aa).

18–23 (GAGKTT) serves as a coordination point for ATP. Thr22 contributes to the Mg(2+) binding site. 3 residues coordinate substrate: Asp40, Arg64, and Gly86. Position 124 (Arg124) interacts with ATP. Substrate is bound at residue Arg143. Gln160 provides a ligand contact to ATP.

Belongs to the shikimate kinase family. As to quaternary structure, monomer. The cofactor is Mg(2+).

The protein resides in the cytoplasm. It carries out the reaction shikimate + ATP = 3-phosphoshikimate + ADP + H(+). Its pathway is metabolic intermediate biosynthesis; chorismate biosynthesis; chorismate from D-erythrose 4-phosphate and phosphoenolpyruvate: step 5/7. Its function is as follows. Catalyzes the specific phosphorylation of the 3-hydroxyl group of shikimic acid using ATP as a cosubstrate. The sequence is that of Shikimate kinase from Chromobacterium violaceum (strain ATCC 12472 / DSM 30191 / JCM 1249 / CCUG 213 / NBRC 12614 / NCIMB 9131 / NCTC 9757 / MK).